The sequence spans 613 residues: MPNQFETQFDIDAFLKHLTERPGVYLMYDASGQIIYVGKAKNLKRRVSSYFKKRHEEIKTETLVSQVASIEVTVTDTESEALILENTLIKRHKPRYNILFRDDKSYPYIFVSTGKKFPSLSYHRGAKRKVGRYFGPFPNASAVHQTLHALQKIFPVRQCTESVFNHRSRPCLQYQIKRCSGPCVEGLVTEAEYNEDVQHTIAFLEGKSFDVIESLGHKMQQASDEFEFEKAALYRDKISALRAIQSQHLINQPGSKDTDVVALAEEANQVCVSIMMYRGGNLWGSQNYFPKIGGQSINPGEIISAFITQHYIDLPIPQMILVSDVLEDKSSLETWLSEQKKAKVSIRKAVSQTHKGLMKLALTNAQSGLKQQLTQKASQAERVKSLQDVLALASPPNHMECFDISHTQGNQTVASCVVFNEGVPNTSAYRKFNIEGIQPGDDYAAMHQAITRRYSRVKKEGLPLPDLIVIDGGKGQLNKAIDVFKTLELDNLPLVSVAKGEGRKAGLEILYTPFNEEGIDLEADDIALHLLNYIRDEAHRFAITSHRSRRQKAQTHSRLEDIPGVGAKTRHKLLTHFGGLTEVKNAAVSELQKVPGISARIAQTIYDFFHGEI.

One can recognise a GIY-YIG domain in the interval 20–98 (ERPGVYLMYD…IKRHKPRYNI (79 aa)). The UVR domain maps to 209-244 (FDVIESLGHKMQQASDEFEFEKAALYRDKISALRAI).

It belongs to the UvrC family. In terms of assembly, interacts with UvrB in an incision complex.

It is found in the cytoplasm. The UvrABC repair system catalyzes the recognition and processing of DNA lesions. UvrC both incises the 5' and 3' sides of the lesion. The N-terminal half is responsible for the 3' incision and the C-terminal half is responsible for the 5' incision. This Hydrogenovibrio crunogenus (strain DSM 25203 / XCL-2) (Thiomicrospira crunogena) protein is UvrABC system protein C.